The following is a 175-amino-acid chain: MTAFTRFAHSRASWFILTGSAIALEAAALYFQYVMKLDPCVMCIYQRLAVFGILASGLIGMTAPKFLIVRILGAIGWAVSATWGLKLALALVDMQNNPSPFSTCSFLPEFPAWMPLHEWFPSVMLPTGMCTDVPWQFMGVTMAEWMVVAFSGYLVALLLFIVPILSGSNKPSLYK.

Over 1–13 (MTAFTRFAHSRAS) the chain is Cytoplasmic. Residues 14 to 30 (WFILTGSAIALEAAALY) form a helical membrane-spanning segment. Topologically, residues 31–48 (FQYVMKLDPCVMCIYQRL) are periplasmic. An intrachain disulfide couples Cys-40 to Cys-43. A helical transmembrane segment spans residues 49–64 (AVFGILASGLIGMTAP). Over 65-71 (KFLIVRI) the chain is Cytoplasmic. A helical membrane pass occupies residues 72 to 89 (LGAIGWAVSATWGLKLAL). The Periplasmic segment spans residues 90–144 (ALVDMQNNPSPFSTCSFLPEFPAWMPLHEWFPSVMLPTGMCTDVPWQFMGVTMAE). Residues Cys-104 and Cys-130 are joined by a disulfide bond. A helical membrane pass occupies residues 145–163 (WMVVAFSGYLVALLLFIVP). The Cytoplasmic segment spans residues 164 to 175 (ILSGSNKPSLYK).

This sequence belongs to the DsbB family.

It localises to the cell inner membrane. Required for disulfide bond formation in some periplasmic proteins. Acts by oxidizing the DsbA protein. This is Disulfide bond formation protein B from Shewanella sp. (strain ANA-3).